The sequence spans 845 residues: Ribonucleoside-diphosphate reductase subunit alpha (845 aa).

The ATP-cone domain occupies 1-98 (MHIIKRNGEP…LYRDDRTKKR (98 aa)). Substrate is bound by residues T303, 318-319 (SC), G347, 534-538 (NLCTE), and 725-729 (PTSST). Residues C319 and C574 are joined by a disulfide bond. N534 serves as the catalytic Proton acceptor. Catalysis depends on C536, which acts as the Cysteine radical intermediate. The Proton acceptor role is filled by E538.

Belongs to the ribonucleoside diphosphate reductase large chain family. Tetramer of two alpha and two beta subunits.

The catalysed reaction is a 2'-deoxyribonucleoside 5'-diphosphate + [thioredoxin]-disulfide + H2O = a ribonucleoside 5'-diphosphate + [thioredoxin]-dithiol. Its activity is regulated as follows. Under complex allosteric control mediated by deoxynucleoside triphosphates and ATP binding. The type of nucleotide bound at the specificity site determines substrate preference. It seems probable that ATP makes the enzyme reduce CDP and UDP, dGTP favors ADP reduction and dTTP favors GDP reduction. In terms of biological role, provides the precursors necessary for DNA synthesis. Catalyzes the biosynthesis of deoxyribonucleotides from the corresponding ribonucleotides. The protein is Ribonucleoside-diphosphate reductase subunit alpha (nrdA) of Treponema pallidum (strain Nichols).